The sequence spans 444 residues: Interferon-induced protein 44 (444 aa).

In terms of domain architecture, TLDc spans 1–152 (MAVTTRLTWL…IQDYEVFRCE (152 aa)).

This sequence belongs to the IFI44 family.

The protein localises to the cytoplasm. In terms of biological role, this protein aggregates to form microtubular structures. This chain is Interferon-induced protein 44 (IFI44), found in Homo sapiens (Human).